A 347-amino-acid polypeptide reads, in one-letter code: Ribosomal RNA large subunit methyltransferase M (347 aa).

Residues S184, 217-220 (APGG), D236, D256, and D272 each bind S-adenosyl-L-methionine. K301 acts as the Proton acceptor in catalysis.

It belongs to the class I-like SAM-binding methyltransferase superfamily. RNA methyltransferase RlmE family. RlmM subfamily. As to quaternary structure, monomer.

It is found in the cytoplasm. The catalysed reaction is cytidine(2498) in 23S rRNA + S-adenosyl-L-methionine = 2'-O-methylcytidine(2498) in 23S rRNA + S-adenosyl-L-homocysteine + H(+). Catalyzes the 2'-O-methylation at nucleotide C2498 in 23S rRNA. This chain is Ribosomal RNA large subunit methyltransferase M, found in Xanthomonas oryzae pv. oryzae (strain KACC10331 / KXO85).